The chain runs to 154 residues: 3-hydroxyacyl-[acyl-carrier-protein] dehydratase FabZ (154 aa).

His57 is an active-site residue.

The protein belongs to the thioester dehydratase family. FabZ subfamily.

It is found in the cytoplasm. The catalysed reaction is a (3R)-hydroxyacyl-[ACP] = a (2E)-enoyl-[ACP] + H2O. Its function is as follows. Involved in unsaturated fatty acids biosynthesis. Catalyzes the dehydration of short chain beta-hydroxyacyl-ACPs and long chain saturated and unsaturated beta-hydroxyacyl-ACPs. In Allorhizobium ampelinum (strain ATCC BAA-846 / DSM 112012 / S4) (Agrobacterium vitis (strain S4)), this protein is 3-hydroxyacyl-[acyl-carrier-protein] dehydratase FabZ.